Reading from the N-terminus, the 208-residue chain is Outer-membrane lipoprotein carrier protein (208 aa).

Residues 1–22 (MKKRLCAVLLASPLLFSAAVFA) form the signal peptide.

Belongs to the LolA family. In terms of assembly, monomer.

It localises to the periplasm. Its function is as follows. Participates in the translocation of lipoproteins from the inner membrane to the outer membrane. Only forms a complex with a lipoprotein if the residue after the N-terminal Cys is not an aspartate (The Asp acts as a targeting signal to indicate that the lipoprotein should stay in the inner membrane). This is Outer-membrane lipoprotein carrier protein from Shewanella baltica (strain OS223).